A 281-amino-acid polypeptide reads, in one-letter code: Putative pyruvate, phosphate dikinase regulatory protein (281 aa).

153 to 160 (GISRTSKT) serves as a coordination point for ADP.

The protein belongs to the pyruvate, phosphate/water dikinase regulatory protein family. PDRP subfamily.

It catalyses the reaction N(tele)-phospho-L-histidyl/L-threonyl-[pyruvate, phosphate dikinase] + ADP = N(tele)-phospho-L-histidyl/O-phospho-L-threonyl-[pyruvate, phosphate dikinase] + AMP + H(+). The catalysed reaction is N(tele)-phospho-L-histidyl/O-phospho-L-threonyl-[pyruvate, phosphate dikinase] + phosphate + H(+) = N(tele)-phospho-L-histidyl/L-threonyl-[pyruvate, phosphate dikinase] + diphosphate. Its function is as follows. Bifunctional serine/threonine kinase and phosphorylase involved in the regulation of the pyruvate, phosphate dikinase (PPDK) by catalyzing its phosphorylation/dephosphorylation. This Bdellovibrio bacteriovorus (strain ATCC 15356 / DSM 50701 / NCIMB 9529 / HD100) protein is Putative pyruvate, phosphate dikinase regulatory protein.